Consider the following 366-residue polypeptide: Chorismate synthase (366 aa).

NADP(+)-binding residues include Arg-48 and Arg-54. Residues 125-127, 238-239, Gly-278, 293-297, and Arg-319 each bind FMN; these read RSS, NA, and KPTSS.

The protein belongs to the chorismate synthase family. Homotetramer. Requires FMNH2 as cofactor.

It catalyses the reaction 5-O-(1-carboxyvinyl)-3-phosphoshikimate = chorismate + phosphate. The protein operates within metabolic intermediate biosynthesis; chorismate biosynthesis; chorismate from D-erythrose 4-phosphate and phosphoenolpyruvate: step 7/7. Catalyzes the anti-1,4-elimination of the C-3 phosphate and the C-6 proR hydrogen from 5-enolpyruvylshikimate-3-phosphate (EPSP) to yield chorismate, which is the branch point compound that serves as the starting substrate for the three terminal pathways of aromatic amino acid biosynthesis. This reaction introduces a second double bond into the aromatic ring system. The sequence is that of Chorismate synthase from Burkholderia vietnamiensis (strain G4 / LMG 22486) (Burkholderia cepacia (strain R1808)).